We begin with the raw amino-acid sequence, 406 residues long: Probable 2,3-bisphosphoglycerate-independent phosphoglycerate mutase (406 aa).

This sequence belongs to the BPG-independent phosphoglycerate mutase family. A-PGAM subfamily.

The enzyme catalyses (2R)-2-phosphoglycerate = (2R)-3-phosphoglycerate. It participates in carbohydrate degradation; glycolysis; pyruvate from D-glyceraldehyde 3-phosphate: step 3/5. Catalyzes the interconversion of 2-phosphoglycerate and 3-phosphoglycerate. This is Probable 2,3-bisphosphoglycerate-independent phosphoglycerate mutase from Thermus thermophilus (strain ATCC BAA-163 / DSM 7039 / HB27).